Reading from the N-terminus, the 364-residue chain is MQVRLNERQQQVLWATVRHYIATAEPVGSKALAEEYNLKVSAATIRNIMGALEQGGLLYQPHTSAGRVPSDSGYRIYVDYLMTPANDLSRRVEQLLSDRLNPTSISLEAVLRGAAQILATLSGYITLITLPQTLTATIRWLQLVRVETSRVMLIVVTDNYETRSALMELGDTADTEESRIERELEVLTNFLNHQLRGRSLTELANLDWQQLDREFQRHGDTLRTLLQDLLQRSQPVGSNQILISGLSEVLQQPEFSQLQQVQTILHLLEDEQDQLWPLICEWSVATDAAPITLPSQQRVRILIGSENPLEPMRMCTLVSSTYQRGSVPIGSVGVLGPTRMPYDKVIPLVEATADYLSDTLGQPA.

Belongs to the HrcA family.

Functionally, negative regulator of class I heat shock genes (grpE-dnaK-dnaJ and groELS operons). Prevents heat-shock induction of these operons. The sequence is that of Heat-inducible transcription repressor HrcA from Cyanothece sp. (strain PCC 7425 / ATCC 29141).